The following is a 203-amino-acid chain: LexA repressor (203 aa).

Residues 32–52 (RAEICTAFGFRSPNAAETHLR) constitute a DNA-binding region (H-T-H motif). Active-site for autocatalytic cleavage activity residues include S121 and K158.

The protein belongs to the peptidase S24 family. As to quaternary structure, homodimer.

The catalysed reaction is Hydrolysis of Ala-|-Gly bond in repressor LexA.. Functionally, represses a number of genes involved in the response to DNA damage (SOS response), including recA and lexA. In the presence of single-stranded DNA, RecA interacts with LexA causing an autocatalytic cleavage which disrupts the DNA-binding part of LexA, leading to derepression of the SOS regulon and eventually DNA repair. This is LexA repressor from Aromatoleum aromaticum (strain DSM 19018 / LMG 30748 / EbN1) (Azoarcus sp. (strain EbN1)).